Here is a 302-residue protein sequence, read N- to C-terminus: tRNA pseudouridine synthase B (302 aa).

D42 acts as the Nucleophile in catalysis.

Belongs to the pseudouridine synthase TruB family. Type 1 subfamily.

The enzyme catalyses uridine(55) in tRNA = pseudouridine(55) in tRNA. Functionally, responsible for synthesis of pseudouridine from uracil-55 in the psi GC loop of transfer RNAs. The sequence is that of tRNA pseudouridine synthase B from Leifsonia xyli subsp. xyli (strain CTCB07).